The primary structure comprises 54 residues: MKTPLFLLLVVLASLLGLALSQDRNDTEWIQSQKDREKWCRLNLGPYLGGRCRK.

An N-terminal signal peptide occupies residues 1–21 (MKTPLFLLLVVLASLLGLALS). A Pyrrolidone carboxylic acid modification is found at Q22. The N-linked (GlcNAc...) asparagine glycan is linked to N25. Cysteines 40 and 52 form a disulfide. The propeptide occupies 53 to 54 (RK).

To paragonial peptide B. In terms of tissue distribution, ductus ejaculatorius.

Its subcellular location is the secreted. Induces post-mating responses; increased oviposition and reduced receptivity. The sequence is that of Ductus ejaculatorius peptide 99B (Dup99B) from Drosophila melanogaster (Fruit fly).